The following is a 610-amino-acid chain: Solute carrier family 23 member 3 (610 aa).

A compositionally biased stretch (polar residues) spans 1 to 16 (MSRSPLNPSQLRSVGS). Positions 1-32 (MSRSPLNPSQLRSVGSQDALAPLPPPAPQNPS) are disordered. The Cytoplasmic segment spans residues 1 to 49 (MSRSPLNPSQLRSVGSQDALAPLPPPAPQNPSTHSWDPLCGSLPWGLSC). Residues 50-70 (LLALQHVLVMASLLCVSHLLL) traverse the membrane as a helical segment. Over 71 to 85 (LCSLSPGGLSYSPSQ) the chain is Extracellular. The chain crosses the membrane as a helical span at residues 86–106 (LLASSFFSCGMSTILQTWMGS). The Cytoplasmic segment spans residues 107 to 164 (RLPLVQAPSLEFLIPALVLTSQKLPRAIQTPGNSSLMLHLCRGPSCHGLGHWNTSLQE). The chain crosses the membrane as a helical span at residues 165-185 (VSGAVVVSGLLQGMMGLLGSP). Topologically, residues 186 to 187 (GH) are extracellular. A helical membrane pass occupies residues 188–208 (VFPHCGPLVLAPSLVVAGLSA). Residues 209–211 (HRE) are Cytoplasmic-facing. The helical transmembrane segment at 212–232 (VAQFCFTHWGLALLVILLMVV) threads the bilayer. The Extracellular portion of the chain corresponds to 233 to 266 (CSQHLGSCQFHVCPWRRASTSSTHTPLPVFRLLS). The helical transmembrane segment at 267-287 (VLIPVACVWIVSAFVGFSVIP) threads the bilayer. Residues 288 to 316 (QELSAPTKAPWIWLPHPGEWNWPLLTPRA) lie on the Cytoplasmic side of the membrane. The chain crosses the membrane as a helical span at residues 317 to 337 (LAAGISMALAASTSSLGCYAL). The Extracellular segment spans residues 338–355 (CGRLLHLPPPPPHACSRG). A helical transmembrane segment spans residues 356–376 (LSLEGLGSVLAGLLGSPMGTA). Over 377 to 394 (SSFPNVGKVGLIQAGSQQ) the chain is Cytoplasmic. A helical transmembrane segment spans residues 395-414 (VAHLVGLLCVGLGLSPRLAQ). The Extracellular segment spans residues 415 to 423 (LLTTIPLPV). The chain crosses the membrane as a helical span at residues 424-446 (VGGVLGVTQAVVLSAGFSSFYLA). Topologically, residues 447–452 (DIDSGR) are cytoplasmic. The helical transmembrane segment at 453–472 (NIFIVGFSIFMALLLPRWFR) threads the bilayer. Residues 473-486 (EAPVLFSTGWSPLD) lie on the Extracellular side of the membrane. A helical transmembrane segment spans residues 487-507 (VLLHSLLTQPIFLAGLSGFLL). Residues 508 to 610 (ENTIPGTQLE…SSREGFRSQK (103 aa)) are Cytoplasmic-facing. The interval 571–610 (PEDPGDEEGGSSEPEEMADLLPGSGEPCPESSREGFRSQK) is disordered. Residues 573–588 (DPGDEEGGSSEPEEMA) are compositionally biased toward acidic residues. Over residues 601-610 (SSREGFRSQK) the composition is skewed to basic and acidic residues.

Belongs to the nucleobase:cation symporter-2 (NCS2) (TC 2.A.40) family.

Its subcellular location is the membrane. The catalysed reaction is hypoxanthine(out) + Na(+)(out) = hypoxanthine(in) + Na(+)(in). Its function is as follows. Acts as a sodium-dependent hypoxanthine transporter. May show xanthine-hypoxanthine exchange activity. The polypeptide is Solute carrier family 23 member 3 (SLC23A3) (Homo sapiens (Human)).